Reading from the N-terminus, the 165-residue chain is Type II secretion system protein M (165 aa).

Over 1–22 (MKELLAPVQAWWRSVTPREQKM) the chain is Cytoplasmic. A helical membrane pass occupies residues 23–43 (VMGMGALTVLAIAYWGIWQPL). Residues 44 to 165 (SERTAQAQAR…VKRLQLKRGG (122 aa)) are Periplasmic-facing.

This sequence belongs to the GSP M family. In terms of assembly, type II secretion system is composed of four main components: the outer membrane complex, the inner membrane complex, the cytoplasmic secretion ATPase and the periplasm-spanning pseudopilus. Forms homodimers. Interacts with EpsL/GspL. Interacts with EpsE/GspE. Interacts with EpsF/GspF.

It localises to the cell inner membrane. Functionally, inner membrane component of the type II secretion system required for the energy-dependent secretion of extracellular factors such as proteases and toxins from the periplasm. Plays a role in the complex assembly and recruits EpsL resulting in a stable complex in the inner membrane. Provides thus a link between the energy-providing EpsE protein in the cytoplasm and the rest of the T2SS machinery. The polypeptide is Type II secretion system protein M (epsM) (Vibrio cholerae serotype O1 (strain ATCC 39315 / El Tor Inaba N16961)).